Consider the following 147-residue polypeptide: Large ribosomal subunit protein uL16 (147 aa).

It belongs to the universal ribosomal protein uL16 family. Part of the 50S ribosomal subunit.

Its function is as follows. Binds 23S rRNA and is also seen to make contacts with the A and possibly P site tRNAs. The chain is Large ribosomal subunit protein uL16 from Caldicellulosiruptor saccharolyticus (strain ATCC 43494 / DSM 8903 / Tp8T 6331).